We begin with the raw amino-acid sequence, 232 residues long: Adenosylcobinamide-GDP ribazoletransferase (232 aa).

The next 7 helical transmembrane spans lie at 24–44, 46–66, 96–116, 117–137, 153–173, 174–194, and 210–230; these read LWAFPLVSLVSSIIPIAILYL, IPLANVLALLSLYFVIGLLHL, IAGVFAVVVVLFLQVYSLSML, PFYAIYIAELNSKFSMLLGLA, GMNGRQLAIGVVLYVLLYLPV, VIYDPSALFGVMGLVFAWYVI, and GAMAEITRAGTLVILSFSLCF.

Belongs to the CobS family. Requires Mg(2+) as cofactor.

Its subcellular location is the cell membrane. The catalysed reaction is alpha-ribazole + adenosylcob(III)inamide-GDP = adenosylcob(III)alamin + GMP + H(+). It catalyses the reaction alpha-ribazole 5'-phosphate + adenosylcob(III)inamide-GDP = adenosylcob(III)alamin 5'-phosphate + GMP + H(+). It functions in the pathway cofactor biosynthesis; adenosylcobalamin biosynthesis; adenosylcobalamin from cob(II)yrinate a,c-diamide: step 7/7. Functionally, joins adenosylcobinamide-GDP and alpha-ribazole to generate adenosylcobalamin (Ado-cobalamin). Also synthesizes adenosylcobalamin 5'-phosphate from adenosylcobinamide-GDP and alpha-ribazole 5'-phosphate. In Pyrococcus abyssi (strain GE5 / Orsay), this protein is Adenosylcobinamide-GDP ribazoletransferase.